Consider the following 463-residue polypeptide: uncharacterized protein (463 aa).

11 helical membrane-spanning segments follow: residues 6–26 (ILPV…FMLL), 31–51 (TFIS…SLSA), 60–80 (FIYA…IVSM), 101–123 (VRGP…LFFW), 130–152 (LIGA…AAMA), 189–209 (ASIP…FIMI), 242–262 (SILA…MLLF), 269–289 (ATAL…FFVY), 304–324 (GFKF…FFYL), 413–433 (AIWV…AAIC), and 443–463 (KNFI…VMML).

The protein localises to the cell membrane. This is an uncharacterized protein from Bacillus subtilis (strain 168).